A 213-amino-acid chain; its full sequence is Motile sperm domain-containing protein 1 (213 aa).

An MSP domain is found at 16-143 (PVFVFPTELI…KEHLTESVFF (128 aa)). The next 2 membrane-spanning stretches (helical) occupy residues 159–179 (SLLT…PTLG) and 191–211 (LSVN…MAIL). The short motif at 205–208 (LITM) is the Nuclear export signal element.

The protein localises to the endoplasmic reticulum membrane. The protein resides in the golgi apparatus membrane. Functionally, plays a role in differentiation and/or proliferation of mesenchymal stem cells. Proposed to be involved in epithelial-to-mesenchymal transition (EMT). However, another study suggests that it is not required for EMT or stem cell self-renewal and acts during later stages of differentiation. The protein is Motile sperm domain-containing protein 1 (Mospd1) of Rattus norvegicus (Rat).